We begin with the raw amino-acid sequence, 147 residues long: Probable disulfide formation protein (147 aa).

The helical transmembrane segment at 9–28 threads the bilayer; the sequence is NYSLYFAWLTALIATLGSLY. A disulfide bridge links C38 with C41. The next 2 helical transmembrane spans lie at 43–62 and 69–86; these read YQRV…AYRT and YALP…YQYL. An intrachain disulfide couples C99 to C106. Residues 115–138 traverse the membrane as a helical segment; the sequence is GFITLPFLGMLATLIMSFFLIMAF.

Belongs to the DsbB family. BdbC subfamily.

It is found in the cell inner membrane. Required for disulfide bond formation in some proteins. In Coxiella burnetii (strain CbuG_Q212) (Coxiella burnetii (strain Q212)), this protein is Probable disulfide formation protein.